The chain runs to 103 residues: Large ribosomal subunit protein mL63 (103 aa).

The protein belongs to the mitochondrion-specific ribosomal protein mL63 family.

The protein resides in the mitochondrion. The protein is Large ribosomal subunit protein mL63 (mrpl57) of Danio rerio (Zebrafish).